We begin with the raw amino-acid sequence, 170 residues long: MAPKKAKRRAAAEGGSSSVFSMFDQTQIQEFKEAFTVIDQNRDGIIDKEDLRDTFAAMGRLNVKNEELDAMMKEASGPINFTVFLNMFGEKLKGADPEDVITGAFKVLDPEGKGTIKKKFLEELLTTQCDRFSQEEIKNMWAAFPPDVGGNVDYKNICYVITHGDAKDQE.

A N,N,N-trimethylalanine modification is found at Ala2. A phosphoserine mark is found at Ser16 and Ser17. A phosphothreonine mark is found at Thr26 and Thr36. Positions 26-61 (TQIQEFKEAFTVIDQNRDGIIDKEDLRDTFAAMGRL) constitute an EF-hand 1 domain. Asp39, Asn41, Asp43, and Asp50 together coordinate Ca(2+). Ser76 is modified (phosphoserine). 2 consecutive EF-hand domains span residues 96–131 (DPED…QCDR) and 132–167 (FSQE…GDAK). Thr102 bears the Phosphothreonine mark.

In terms of assembly, myosin is a hexamer of 2 heavy chains and 4 light chains.

Functionally, plays a role in muscle contraction. The sequence is that of Myosin regulatory light chain 2, skeletal muscle isoform from Bos taurus (Bovine).